The following is a 647-amino-acid chain: Bifunctional enzyme CysN/CysC (647 aa).

Residues 1–472 (MSHQSDLIAT…TEERAARFGQ (472 aa)) form a sulfate adenylyltransferase region. The region spanning 22 to 239 (KQLLRFITCG…LETVYIGSDR (218 aa)) is the tr-type G domain. The G1 stretch occupies residues 31–38 (GSVDDGKS). 31-38 (GSVDDGKS) lines the GTP pocket. Residues 89–93 (GITID) are G2. Residues 110 to 113 (DTPG) form a G3 region. GTP is bound by residues 110–114 (DTPGH) and 165–168 (NKMD). Positions 165-168 (NKMD) are G4. Residues 204–206 (SAL) are G5. The adenylyl-sulfate kinase stretch occupies residues 473–614 (KPATVLLTGL…FPGVTAKYDV (142 aa)). 481-488 (GLTGSGKT) is an ATP binding site.

The protein in the C-terminal section; belongs to the APS kinase family. In the N-terminal section; belongs to the TRAFAC class translation factor GTPase superfamily. Classic translation factor GTPase family. CysN/NodQ subfamily. In terms of assembly, heterodimer composed of CysD, the smaller subunit, and CysNC.

It catalyses the reaction sulfate + ATP + H(+) = adenosine 5'-phosphosulfate + diphosphate. It carries out the reaction adenosine 5'-phosphosulfate + ATP = 3'-phosphoadenylyl sulfate + ADP + H(+). It participates in sulfur metabolism; hydrogen sulfide biosynthesis; sulfite from sulfate: step 1/3. Its pathway is sulfur metabolism; hydrogen sulfide biosynthesis; sulfite from sulfate: step 2/3. With CysD forms the ATP sulfurylase (ATPS) that catalyzes the adenylation of sulfate producing adenosine 5'-phosphosulfate (APS) and diphosphate, the first enzymatic step in sulfur assimilation pathway. APS synthesis involves the formation of a high-energy phosphoric-sulfuric acid anhydride bond driven by GTP hydrolysis by CysN coupled to ATP hydrolysis by CysD. Its function is as follows. APS kinase catalyzes the synthesis of activated sulfate. The sequence is that of Bifunctional enzyme CysN/CysC (cysNC) from Rhodopirellula baltica (strain DSM 10527 / NCIMB 13988 / SH1).